The primary structure comprises 298 residues: Acetate permease A (298 aa).

Positions 1–43 (MSAEQNHGLEKDVGGPAAPAAAAPNAPAAAPGAPPAGMSAEEH) are disordered. Positions 14-37 (GGPAAPAAAAPNAPAAAPGAPPAG) are enriched in low complexity. The next 6 membrane-spanning stretches (helical) occupy residues 86–106 (APLG…INMG), 115–135 (IVIA…GMWE), 146–166 (ALSS…PGGF), 185–205 (SFGL…FCTL), 210–230 (AFFL…VGYI), and 245–265 (AGGF…LAGI).

The protein belongs to the acetate uptake transporter (AceTr) (TC 2.A.96) family.

The protein resides in the cell membrane. It localises to the vacuole membrane. Its function is as follows. High affinity monocarboxylate transporter (MCT) involved in acetate uptake. Unlike other activities involved in acetate utilization, acpA is dispensable for growth on the acetate precursor ethanol. The polypeptide is Acetate permease A (Emericella nidulans (strain FGSC A4 / ATCC 38163 / CBS 112.46 / NRRL 194 / M139) (Aspergillus nidulans)).